The primary structure comprises 82 residues: Metallothionein (82 aa).

Positions 6, 8, 11, 13, 29, 33, 37, 43, 48, and 50 each coordinate Cd(2+). Residues Cys6, Cys8, and Cys11 each coordinate Zn(2+). Positions 29, 33, 37, 43, 48, and 50 each coordinate Zn(2+). The interval 61–82 (ITNNQLDEALEETFPASDPISP) is disordered.

The protein belongs to the metallothionein superfamily.

Metallothioneins are small proteins that have a high content of cysteine residues which allow them to bind heavy metal ions through clusters of thiolate bonds. Preferentially, binds four Cd(2+) ions. Also binds three Zn(2+) ions but with less affinity. Required for long-term viability. May play a role in the storage or sequestration of metals when present in excess. The polypeptide is Metallothionein (Pseudomonas fluorescens (strain Q2-87)).